A 4490-amino-acid chain; its full sequence is Dynein axonemal heavy chain 8 (4490 aa).

Ser674 carries the phosphoserine modification. AAA regions lie at residues 1808 to 2030 (YQNE…VLRT), 2090 to 2309 (NAVA…KLNL), 2416 to 2669 (YYPT…IWQG), and 2780 to 3034 (QFNE…YRRR). Residues 1846–1853 (GPAGTGKT) and 2128–2135 (GPSGSGKT) each bind ATP. A stalk region spans residues 3049–3346 (YKNIYAEKVK…MDLLNDADTC (298 aa)). Coiled-coil stretches lie at residues 3072–3164 (DKLM…ALNT), 3290–3354 (LKAN…QAAS), and 3594–3630 (RRVI…DNLL). AAA regions lie at residues 3432–3662 (LVDP…EVSE) and 3877–4091 (ARKY…FIQN).

This sequence belongs to the dynein heavy chain family. Consists of at least two heavy chains and a number of intermediate and light chains. As to expression, expressed in spermatozoa (at protein level). Not detected in airway epithelial cells (at protein level).

The protein resides in the cytoplasm. Its subcellular location is the cytoskeleton. It is found in the flagellum axoneme. Functionally, force generating protein component of the outer dynein arms (ODAs) in the sperm flagellum. Produces force towards the minus ends of microtubules. Dynein has ATPase activity; the force-producing power stroke is thought to occur on release of ADP. Involved in sperm motility; implicated in sperm flagellar assembly. This chain is Dynein axonemal heavy chain 8, found in Homo sapiens (Human).